A 445-amino-acid chain; its full sequence is Ribosomal protein uS12 methylthiotransferase RimO (445 aa).

Residues 4–119 (IKVALVSLGC…LLESIKVFLK (116 aa)) form the MTTase N-terminal domain. C13, C48, C82, C156, C160, and C163 together coordinate [4Fe-4S] cluster. The region spanning 142–372 (TTPTYTAYVR…MILQQSISKD (231 aa)) is the Radical SAM core domain. In terms of domain architecture, TRAM spans 375–441 (KEKIGKIYEV…EYDLIGVVYN (67 aa)).

It belongs to the methylthiotransferase family. RimO subfamily. Requires [4Fe-4S] cluster as cofactor.

It is found in the cytoplasm. It carries out the reaction L-aspartate(89)-[ribosomal protein uS12]-hydrogen + (sulfur carrier)-SH + AH2 + 2 S-adenosyl-L-methionine = 3-methylsulfanyl-L-aspartate(89)-[ribosomal protein uS12]-hydrogen + (sulfur carrier)-H + 5'-deoxyadenosine + L-methionine + A + S-adenosyl-L-homocysteine + 2 H(+). Functionally, catalyzes the methylthiolation of an aspartic acid residue of ribosomal protein uS12. The sequence is that of Ribosomal protein uS12 methylthiotransferase RimO from Clostridium botulinum (strain Langeland / NCTC 10281 / Type F).